Here is a 130-residue protein sequence, read N- to C-terminus: Classical arabinogalactan protein 7 (130 aa).

Positions 1–21 are cleaved as a signal peptide; it reads MNSKIIEAFFIVALFTTSCLA. The residue at position 22 (Gln22) is a Pyrrolidone carboxylic acid. Residues 22-108 form a disordered region; the sequence is QAPAPSPTTT…DASAPPPNAA (87 aa). 4-hydroxyproline is present on residues Pro24, Pro26, Pro28, Pro35, and Pro36. Pro24, Pro26, Pro28, Pro35, and Pro36 each carry an O-linked (Ara...) hydroxyproline glycan. The span at 33–68 shows a compositional bias: pro residues; sequence TPPPVATPPPAATPAPTTTPPPAVSPAPTSSPPSSA. Asn106 carries GPI-anchor amidated asparagine lipidation. Positions 107–130 are cleaved as a propeptide — removed in mature form; the sequence is AALTNKAFVVGSLVAAIIYAVVLA.

It belongs to the classical AGP family. In terms of processing, O-glycosylated on hydroxyprolines; noncontiguous hydroxylproline residues are glycosylated with arabinogalactan.

The protein resides in the cell membrane. Functionally, proteoglycan that seems to be implicated in diverse developmental roles such as differentiation, cell-cell recognition, embryogenesis and programmed cell death. The chain is Classical arabinogalactan protein 7 (AGP7) from Arabidopsis thaliana (Mouse-ear cress).